An 881-amino-acid chain; its full sequence is MNSKNSIILDNLADVSDIIDYEQNSIDYQRSIKNIEQLKSTEATEITNKLAINKAKKSSNILLEVPKETIYLDHNGSIQVITSEIIRTYVEKIFEKMEVTHLDIDKMTKNIFPKLKSINTIKDIDNQIISTASEMVTDHYDYPKIAVWILMTNLHDNTSDDFLETAEKLYNNKSESNKNAPIISENIYNFIKKHIKEINRVIRYDRDYNLTIFGFRTLEKSYLKRINKKIVERPQHLFMRVAITLHYRKNDLDRIFETYKYLSKGYFTHATPTLFNAGTTHEQLSSCFLLGIGDSLEEISECWKECALISKHAGGIGIHMTNIRVEGAYIASTQGEAGGLRVLTIFNDISRYANQGGKRPGSFAIFIEPWHGDIFFFLDLKKNTGAETERARDLFLGLMINDIFMERVYKDDVWSLMCPSQCPNLLNKYGDEFTKEYLKYESEGIYLKQIRAIDLWFKIMESQIETGVPYVMFKDAINDKSNQINIGVVNGSNLCCEIVEVSDKNNFSVCNLSSICLPRFVKIIDEVPTFNYQKLFKISRILTRNLNNIIDINFYPLDKTRITNLRDRPIGIGVQGLADVFAMFKTPFDSEIARDLNRKIFETIYYGALTESNKLAREFGTYQTYQGSPISQGKFQFDLWNFDKSQLSGMWDWELLRQEILNHGVRNSLVTTCMPTASTSQIMGWNECIEPYTENIYSRSTMAGEYFVINKHLIKDLIELGVWNSEMVDLIKYYKGSVANIPNIPDNIKAIYRTVWEIPQKSIIEMAADRAPFVDQTQSMNLYIDKPSFARLNSCLFYAWRKGLKTGMYYLRSKPASSANQFGIDIDKIKEIESKNGIKKQEDTFDLTDLTNTINQQVSGMVCRFVPAHLRKPGECLSCDG.

The ATP-cone domain occupies 69–160 (TIYLDHNGSI…MTNLHDNTSD (92 aa)). Residues Thr271, 286–287 (SC), Gly315, 493–497 (NLCCE), and 675–679 (PTAST) contribute to the substrate site. Cysteines 287 and 510 form a disulfide. Catalysis depends on Asn493, which acts as the Proton acceptor. Cys495 serves as the catalytic Cysteine radical intermediate. The active-site Proton acceptor is the Glu497.

The protein belongs to the ribonucleoside diphosphate reductase large chain family. As to quaternary structure, heterotetramer composed of a homodimer of the large subunit (R1) and a homodimer of the small subunit (R2). Larger multisubunit protein complex are also active, composed of (R1)n(R2)n.

The enzyme catalyses a 2'-deoxyribonucleoside 5'-diphosphate + [thioredoxin]-disulfide + H2O = a ribonucleoside 5'-diphosphate + [thioredoxin]-dithiol. Its activity is regulated as follows. Under complex allosteric control mediated by deoxynucleoside triphosphates and ATP binding. The type of nucleotide bound at the specificity site determines substrate preference. It seems probable that ATP makes the enzyme reduce CDP and UDP, dGTP favors ADP reduction and dTTP favors GDP reduction. Its function is as follows. Ribonucleoside-diphosphate reductase holoenzyme provides the precursors necessary for viral DNA synthesis. Allows virus growth in non-dividing cells. Catalyzes the biosynthesis of deoxyribonucleotides from the corresponding ribonucleotides. This chain is Ribonucleoside-diphosphate reductase large subunit (RNR1), found in Acanthamoeba polyphaga mimivirus (APMV).